Consider the following 433-residue polypeptide: 26S proteasome regulatory subunit 7 (433 aa).

Residues 1–23 (MPDYLGADQRKTKEEEKEDKPIR) are disordered. A compositionally biased stretch (basic and acidic residues) spans 8-23 (DQRKTKEEEKEDKPIR). Residue 216–223 (GPPGTGKT) coordinates ATP.

It belongs to the AAA ATPase family. Post-translationally, phosphorylated. Dephosphorylated by ublcp1 which impairs psmc2 ATPase activity and disrupts 26S proteasome assembly.

The protein resides in the cytoplasm. The protein localises to the nucleus. In terms of biological role, the 26S proteasome is involved in the ATP-dependent degradation of ubiquitinated proteins. The regulatory (or ATPase) complex confers ATP dependency and substrate specificity to the 26S complex. This Xenopus laevis (African clawed frog) protein is 26S proteasome regulatory subunit 7 (psmc2).